The sequence spans 93 residues: Alpha-defensin 9 (93 aa).

A signal peptide spans 1 to 19; that stretch reads MKTLVLLSALVLLAFQVQA. A propeptide spanning residues 20–58 is cleaved from the precursor; sequence DPIQNTDEETKTEEQPGEEDQAVSVSFGDPEGSSLQEES. Positions 23–56 are disordered; it reads QNTDEETKTEEQPGEEDQAVSVSFGDPEGSSLQE. 3 cysteine pairs are disulfide-bonded: Cys64–Cys92, Cys66–Cys81, and Cys71–Cys91.

The protein belongs to the alpha-defensin family. Paneth cells of the small bowel.

The protein resides in the secreted. Its function is as follows. Probably contributes to the antimicrobial barrier function of the small bowel mucosa. This is Alpha-defensin 9 (Defa9) from Mus musculus (Mouse).